A 305-amino-acid polypeptide reads, in one-letter code: GTP cyclohydrolase FolE2 (305 aa).

The protein belongs to the GTP cyclohydrolase IV family.

It carries out the reaction GTP + H2O = 7,8-dihydroneopterin 3'-triphosphate + formate + H(+). Its pathway is cofactor biosynthesis; 7,8-dihydroneopterin triphosphate biosynthesis; 7,8-dihydroneopterin triphosphate from GTP: step 1/1. In terms of biological role, converts GTP to 7,8-dihydroneopterin triphosphate. The protein is GTP cyclohydrolase FolE2 of Xanthomonas axonopodis pv. citri (strain 306).